The primary structure comprises 399 residues: Protein translocase subunit SecD (399 aa).

The next 6 membrane-spanning stretches (helical) occupy residues 7–27, 239–259, 262–282, 286–306, 329–351, and 357–381; these read IKTA…LTFP, VIGA…LGLV, IALL…NATL, GVAG…LIFA, ALRA…FYFG, and GFAV…RTLL.

The protein belongs to the SecD/SecF family. SecD subfamily. As to quaternary structure, forms a complex with SecF. Part of the essential Sec protein translocation apparatus which comprises SecA, SecYEG and auxiliary proteins SecDF. Other proteins may also be involved.

It is found in the cell inner membrane. In terms of biological role, part of the Sec protein translocase complex. Interacts with the SecYEG preprotein conducting channel. SecDF uses the proton motive force (PMF) to complete protein translocation after the ATP-dependent function of SecA. The protein is Protein translocase subunit SecD of Dictyoglomus turgidum (strain DSM 6724 / Z-1310).